Consider the following 58-residue polypeptide: Small ribosomal subunit protein bS21 (58 aa).

It belongs to the bacterial ribosomal protein bS21 family.

The chain is Small ribosomal subunit protein bS21 from Streptococcus pyogenes serotype M49 (strain NZ131).